Here is a 573-residue protein sequence, read N- to C-terminus: Sulfite reductase [NADPH] hemoprotein beta-component (573 aa).

4 residues coordinate [4Fe-4S] cluster: Cys-438, Cys-444, Cys-483, and Cys-487. Cys-487 contacts siroheme.

The protein belongs to the nitrite and sulfite reductase 4Fe-4S domain family. As to quaternary structure, alpha(8)-beta(8). The alpha component is a flavoprotein, the beta component is a hemoprotein. It depends on siroheme as a cofactor. [4Fe-4S] cluster is required as a cofactor.

The catalysed reaction is hydrogen sulfide + 3 NADP(+) + 3 H2O = sulfite + 3 NADPH + 4 H(+). Its pathway is sulfur metabolism; hydrogen sulfide biosynthesis; hydrogen sulfide from sulfite (NADPH route): step 1/1. Its function is as follows. Component of the sulfite reductase complex that catalyzes the 6-electron reduction of sulfite to sulfide. This is one of several activities required for the biosynthesis of L-cysteine from sulfate. The sequence is that of Sulfite reductase [NADPH] hemoprotein beta-component from Nitrosomonas europaea (strain ATCC 19718 / CIP 103999 / KCTC 2705 / NBRC 14298).